The sequence spans 177 residues: Probable chemoreceptor glutamine deamidase CheD (177 aa).

This sequence belongs to the CheD family.

The catalysed reaction is L-glutaminyl-[protein] + H2O = L-glutamyl-[protein] + NH4(+). Functionally, probably deamidates glutamine residues to glutamate on methyl-accepting chemotaxis receptors (MCPs), playing an important role in chemotaxis. This chain is Probable chemoreceptor glutamine deamidase CheD, found in Pseudomonas savastanoi pv. phaseolicola (strain 1448A / Race 6) (Pseudomonas syringae pv. phaseolicola (strain 1448A / Race 6)).